The following is a 326-amino-acid chain: Biotin synthase (326 aa).

The Radical SAM core domain occupies Gly40 to Ala264. Cys55, Cys59, and Cys62 together coordinate [4Fe-4S] cluster. [2Fe-2S] cluster is bound by residues Cys99, Cys130, Cys190, and Arg262.

Belongs to the radical SAM superfamily. Biotin synthase family. In terms of assembly, homodimer. [4Fe-4S] cluster serves as cofactor. [2Fe-2S] cluster is required as a cofactor.

The catalysed reaction is (4R,5S)-dethiobiotin + (sulfur carrier)-SH + 2 reduced [2Fe-2S]-[ferredoxin] + 2 S-adenosyl-L-methionine = (sulfur carrier)-H + biotin + 2 5'-deoxyadenosine + 2 L-methionine + 2 oxidized [2Fe-2S]-[ferredoxin]. The protein operates within cofactor biosynthesis; biotin biosynthesis; biotin from 7,8-diaminononanoate: step 2/2. In terms of biological role, catalyzes the conversion of dethiobiotin (DTB) to biotin by the insertion of a sulfur atom into dethiobiotin via a radical-based mechanism. The chain is Biotin synthase from Halorhodospira halophila (strain DSM 244 / SL1) (Ectothiorhodospira halophila (strain DSM 244 / SL1)).